The chain runs to 675 residues: Protein C-mannosyl-transferase DPY19L1 (675 aa).

Positions 1 to 22 (MEGRPPPEGRPPPRPRTGRAPR) are disordered. The next 11 helical transmembrane spans lie at 66–88 (LYYS…WMIM), 156–176 (ACFY…LFFI), 186–208 (LGGL…VMWT), 236–254 (LYRG…FMLP), 260–279 (FVLL…GYID), 286–303 (IIYI…LMFG), 309–325 (TSYY…ILAM), 334–354 (VSEL…TVIL), 414–434 (VVLV…WGVL), 449–469 (GELV…ILIM), and 491–511 (LFGW…ILAA).

The protein belongs to the dpy-19 family. In terms of tissue distribution, widely expressed.

It localises to the endoplasmic reticulum membrane. The enzyme catalyses L-tryptophyl-[protein] + a di-trans,poly-cis-dolichyl beta-D-mannosyl phosphate = C-alpha-D-mannosyl-L-tryptophyl-[protein] + a di-trans,poly-cis-dolichyl phosphate + H(+). It participates in protein modification; protein glycosylation. In terms of biological role, C-mannosyltransferase that mediates the C-mannosylation tryptophan residues on target proteins. The reaction occurs on the luminal side of the endoplasmic reticulum and involves the transfer of a mannose unit from a dolichylphosphate mannose (Dol-P-Man) donor to an acceptor protein containing a WxxW consensus sequence. C-mannosylates the first two tryptophans in the WxxWxxWxxC motif in thrombospondin (TSP) type-1 of UNC5A. Regulates neurite extension during development. The polypeptide is Protein C-mannosyl-transferase DPY19L1 (DPY19L1) (Homo sapiens (Human)).